Reading from the N-terminus, the 738-residue chain is 1,4-alpha-glucan branching enzyme GlgB (738 aa).

Aspartate 399 acts as the Nucleophile in catalysis. Glutamate 452 serves as the catalytic Proton donor.

This sequence belongs to the glycosyl hydrolase 13 family. GlgB subfamily. As to quaternary structure, monomer.

The catalysed reaction is Transfers a segment of a (1-&gt;4)-alpha-D-glucan chain to a primary hydroxy group in a similar glucan chain.. The protein operates within glycan biosynthesis; glycogen biosynthesis. Functionally, catalyzes the formation of the alpha-1,6-glucosidic linkages in glycogen by scission of a 1,4-alpha-linked oligosaccharide from growing alpha-1,4-glucan chains and the subsequent attachment of the oligosaccharide to the alpha-1,6 position. This Chlamydia trachomatis serovar L2b (strain UCH-1/proctitis) protein is 1,4-alpha-glucan branching enzyme GlgB.